Here is a 273-residue protein sequence, read N- to C-terminus: 4-hydroxy-tetrahydrodipicolinate reductase (273 aa).

Residues Gly-12 to Met-17 and Glu-38 contribute to the NAD(+) site. Arg-39 contributes to the NADP(+) binding site. NAD(+) is bound by residues Gly-102–Thr-104 and Ala-126–Phe-129. His-159 serves as the catalytic Proton donor/acceptor. His-160 lines the (S)-2,3,4,5-tetrahydrodipicolinate pocket. The active-site Proton donor is the Lys-163. Gly-169–Thr-170 contributes to the (S)-2,3,4,5-tetrahydrodipicolinate binding site.

It belongs to the DapB family. As to quaternary structure, homotetramer.

The protein resides in the cytoplasm. It carries out the reaction (S)-2,3,4,5-tetrahydrodipicolinate + NAD(+) + H2O = (2S,4S)-4-hydroxy-2,3,4,5-tetrahydrodipicolinate + NADH + H(+). The catalysed reaction is (S)-2,3,4,5-tetrahydrodipicolinate + NADP(+) + H2O = (2S,4S)-4-hydroxy-2,3,4,5-tetrahydrodipicolinate + NADPH + H(+). It participates in amino-acid biosynthesis; L-lysine biosynthesis via DAP pathway; (S)-tetrahydrodipicolinate from L-aspartate: step 4/4. Catalyzes the conversion of 4-hydroxy-tetrahydrodipicolinate (HTPA) to tetrahydrodipicolinate. In Enterobacter sp. (strain 638), this protein is 4-hydroxy-tetrahydrodipicolinate reductase.